Consider the following 334-residue polypeptide: Phosphate acyltransferase (334 aa).

It belongs to the PlsX family. As to quaternary structure, homodimer. Probably interacts with PlsY.

It is found in the cytoplasm. The enzyme catalyses a fatty acyl-[ACP] + phosphate = an acyl phosphate + holo-[ACP]. It participates in lipid metabolism; phospholipid metabolism. Catalyzes the reversible formation of acyl-phosphate (acyl-PO(4)) from acyl-[acyl-carrier-protein] (acyl-ACP). This enzyme utilizes acyl-ACP as fatty acyl donor, but not acyl-CoA. The protein is Phosphate acyltransferase of Clostridium kluyveri (strain NBRC 12016).